A 311-amino-acid polypeptide reads, in one-letter code: Formyltransferase/hydrolase complex subunit D (311 aa).

It belongs to the FTR family. As to quaternary structure, homotetramer. Octaheteromer. Part of the formyltransferase/hydrolase complex fhc; composed of FhcA, FhcB, FhcC and FhcD.

The protein resides in the cytoplasm. It catalyses the reaction N-formylmethanofuran + 5,6,7,8-tetrahydromethanopterin + H(+) = N(5)-formyl-5,6,7,8-tetrahydromethanopterin + methanofuran. It functions in the pathway one-carbon metabolism; formaldehyde degradation; formate from formaldehyde (H(4)MPT route): step 4/5. In terms of biological role, involved in the transformation of 5-formyl tetrahydromethanopterin (5-formyl-H(4)MPT) to methanofuran (MFR) and formate via the intermediate formylmethanofuran (formyl-MFR). Catalyzes the transfer of a formyl group from 5-formyl-H(4)MPT to MFR to produce tetrahydromethanopterin (H(4)MPT) and formyl-MFR, which is then hydrolyzed to formate and MFR. The protein is Formyltransferase/hydrolase complex subunit D of Methylorubrum extorquens (strain ATCC 14718 / DSM 1338 / JCM 2805 / NCIMB 9133 / AM1) (Methylobacterium extorquens).